The following is a 217-amino-acid chain: Small ribosomal subunit protein uS3 (217 aa).

A KH type-2 domain is found at 38–106; sequence IRKFIQKELA…QVHINIVEIK (69 aa).

The protein belongs to the universal ribosomal protein uS3 family. As to quaternary structure, part of the 30S ribosomal subunit. Forms a tight complex with proteins S10 and S14.

In terms of biological role, binds the lower part of the 30S subunit head. Binds mRNA in the 70S ribosome, positioning it for translation. The chain is Small ribosomal subunit protein uS3 from Streptococcus thermophilus (strain CNRZ 1066).